The chain runs to 316 residues: Cell division protein FtsQ (316 aa).

A disordered region spans residues 1 to 34 (MAKAARRTKSAPARRSPRRHARQTGATIRRPKRP). The Cytoplasmic segment spans residues 1–61 (MAKAARRTKS…HPLLKQMAKR (61 aa)). Residues 62-80 (LLLILVIVGFLAGLWAARW) form a helical membrane-spanning segment. Topologically, residues 81–316 (PQLLATKTGE…AADPLVSDRI (236 aa)) are periplasmic. The region spanning 97–165 (FSVRHVEIVG…DTLVVDIVER (69 aa)) is the POTRA domain. Residues 295-316 (PEPVKKATKPAKAADPLVSDRI) are disordered.

The protein belongs to the FtsQ/DivIB family. FtsQ subfamily.

It localises to the cell inner membrane. Essential cell division protein. The sequence is that of Cell division protein FtsQ from Zymomonas mobilis subsp. mobilis (strain ATCC 31821 / ZM4 / CP4).